Consider the following 575-residue polypeptide: Chaperonin 60 subunit alpha 2, chloroplastic (575 aa).

Low complexity predominate over residues 1-18 (MFAVSPSSFSPTTISPRR). A disordered region spans residues 1 to 27 (MFAVSPSSFSPTTISPRRSGQRNEPRK). A chloroplast-targeting transit peptide spans 1-32 (MFAVSPSSFSPTTISPRRSGQRNEPRKFSVVR).

This sequence belongs to the chaperonin (HSP60) family. Part of the Cpn60 complex composed of 7 alpha and 7 beta subunits.

The protein localises to the plastid. The protein resides in the chloroplast. Functionally, involved in protein assisted folding. This chain is Chaperonin 60 subunit alpha 2, chloroplastic (CPN60A2), found in Arabidopsis thaliana (Mouse-ear cress).